The following is a 623-amino-acid chain: Indolepyruvate oxidoreductase subunit IorA (623 aa).

C573, C576, C579, C585, C602, C605, C608, and C612 together coordinate [4Fe-4S] cluster. Residues 593–622 (EKVSIDQSLCVGCAVCAKICPNRAIKPAKS) form the 4Fe-4S ferredoxin-type domain.

Heterodimer of the IorA and IorB subunits. Requires [4Fe-4S] cluster as cofactor.

It carries out the reaction indole-3-pyruvate + 2 oxidized [2Fe-2S]-[ferredoxin] + CoA = (indol-3-yl)acetyl-CoA + 2 reduced [2Fe-2S]-[ferredoxin] + CO2 + H(+). Its function is as follows. Catalyzes the ferredoxin-dependent oxidative decarboxylation of arylpyruvates. In Archaeoglobus fulgidus (strain ATCC 49558 / DSM 4304 / JCM 9628 / NBRC 100126 / VC-16), this protein is Indolepyruvate oxidoreductase subunit IorA (iorA).